A 730-amino-acid chain; its full sequence is MVMLARSKLALDVSRRSQSLQRICYYASLSSRFSGGGGDDGGGSSPEIGGTDSANEWEKLLKPFDLDSLRNSFHKITPFQLYKLLELPLNVSTSMELFSWTGSQNGYRHSFDVYQVLIGKLGANGEFKTIDRLLIQMKDEGIVFKESLFISIMRDYDKAGFPGQTTRLMLEMRNVYSCEPTFKSYNVVLEILVSGNCHKVAANVFYDMLSRKIPPTLFTFGVVMKAFCAVNEIDSALSLLRDMTKHGCVPNSVIYQTLIHSLSKCNRVNEALQLLEEMFLMGCVPDAETFNDVILGLCKFDRINEAAKMVNRMLIRGFAPDDITYGYLMNGLCKIGRVDAAKDLFYRIPKPEIVIFNTLIHGFVTHGRLDDAKAVLSDMVTSYGIVPDVCTYNSLIYGYWKEGLVGLALEVLHDMRNKGCKPNVYSYTILVDGFCKLGKIDEAYNVLNEMSADGLKPNTVGFNCLISAFCKEHRIPEAVEIFREMPRKGCKPDVYTFNSLISGLCEVDEIKHALWLLRDMISEGVVANTVTYNTLINAFLRRGEIKEARKLVNEMVFQGSPLDEITYNSLIKGLCRAGEVDKARSLFEKMLRDGHAPSNISCNILINGLCRSGMVEEAVEFQKEMVLRGSTPDIVTFNSLINGLCRAGRIEDGLTMFRKLQAEGIPPDTVTFNTLMSWLCKGGFVYDACLLLDEGIEDGFVPNHRTWSILLQSIIPQETLDRRRFYNAAF.

The N-terminal 18 residues, 1–18, are a transit peptide targeting the mitochondrion; it reads MVMLARSKLALDVSRRSQ. 17 PPR repeats span residues 110–144, 145–175, 181–215, 216–250, 251–285, 286–320, 321–351, 352–387, 388–422, 423–457, 458–492, 493–527, 528–562, 563–597, 598–632, 633–667, and 668–702; these read SFDV…GIVF, KESL…MRNV, TFKS…KIPP, TLFT…GCVP, NSVI…GCVP, DAET…GFAP, DDIT…IPKP, EIVI…GIVP, DVCT…GCKP, NVYS…GLKP, NTVG…GCKP, DVYT…GVVA, NTVT…GSPL, DEIT…GHAP, SNIS…GSTP, DIVT…GIPP, and DTVT…GFVP.

It belongs to the PPR family. P subfamily.

Its subcellular location is the mitochondrion. In Arabidopsis thaliana (Mouse-ear cress), this protein is Pentatricopeptide repeat-containing protein At5g64320, mitochondrial.